A 213-amino-acid chain; its full sequence is MGQKINPTGLRVGIIKDWESKWYAGKDYADLLHEDIKIREYLENRLSTAAVSSIEIERAANRVNITIHTGKPGMVIGKGGSEVEALRKSLNNLTGKRVHINIVEIKKVDLDATLVADSIARQLENRISFRRAQKQAIQRAMRGGAKGIKTQVSGRLGGADIARAEHYSEGTVPLHTLRADIDYGTAEADTTYGKLGVKVWIYRGEVLPTKTDK.

Positions 38–106 (IREYLENRLS…RVHINIVEIK (69 aa)) constitute a KH type-2 domain.

This sequence belongs to the universal ribosomal protein uS3 family. In terms of assembly, part of the 30S ribosomal subunit. Forms a tight complex with proteins S10 and S14.

Functionally, binds the lower part of the 30S subunit head. Binds mRNA in the 70S ribosome, positioning it for translation. The polypeptide is Small ribosomal subunit protein uS3 (Oceanobacillus iheyensis (strain DSM 14371 / CIP 107618 / JCM 11309 / KCTC 3954 / HTE831)).